The chain runs to 202 residues: Proteasome subunit beta 1 (202 aa).

A propeptide spans 1 to 8 (MGEVVLPG) (removed in mature form; by autocatalysis). Thr9 (nucleophile) is an active-site residue.

It belongs to the peptidase T1B family. As to quaternary structure, the 20S proteasome core is composed of 14 alpha and 14 beta subunits that assemble into four stacked heptameric rings, resulting in a barrel-shaped structure. The two inner rings, each composed of seven catalytic beta subunits, are sandwiched by two outer rings, each composed of seven alpha subunits. The catalytic chamber with the active sites is on the inside of the barrel. Has a gated structure, the ends of the cylinder being occluded by the N-termini of the alpha-subunits. Is capped at one or both ends by the proteasome regulatory ATPase, PAN.

The protein localises to the cytoplasm. The enzyme catalyses Cleavage of peptide bonds with very broad specificity.. The formation of the proteasomal ATPase PAN-20S proteasome complex, via the docking of the C-termini of PAN into the intersubunit pockets in the alpha-rings, triggers opening of the gate for substrate entry. Interconversion between the open-gate and close-gate conformations leads to a dynamic regulation of the 20S proteasome proteolysis activity. Its function is as follows. Component of the proteasome core, a large protease complex with broad specificity involved in protein degradation. The sequence is that of Proteasome subunit beta 1 from Desulfurococcus amylolyticus (strain DSM 18924 / JCM 16383 / VKM B-2413 / 1221n) (Desulfurococcus kamchatkensis).